Here is a 204-residue protein sequence, read N- to C-terminus: Per os infectivity factor 3 (204 aa).

Forms the PIF complex together with PIF1 and PIF2. The complex also interacts with per os infectivity factor PIF0.

Per os factor that plays a role in the initiation of host midgut infection. Unlike PIF1 and PIF2, PIF3 is not involved in specific binding of occluded virions (ODV) to the host midgut target cells. The protein is Per os infectivity factor 3 (AC115) of Lepidoptera (butterflies and moths).